Reading from the N-terminus, the 278-residue chain is MRSNVHQGHVARKRFGQNFLVDDGIIHGIVSAIDPQPNDIVVEIGPGLGALTDPLLERLPGMQVVELDRDLVERLRRRYGDRLVVHAGDALAFDFGKLREPGRALRIVGNLPYNISSPLLFHLVDFADDVRDQHFMLQKEVVERMVADPGSKSYGRLSIMLQVRYHMEHVLDVPPASFNPPPKVDSAVVRMIPWPRAEDGTLRSPYAACDAGVLGDVVTAAFSQRRKVLRNTLSFLRDQVDFDALGFDLTRRAEEVPVAEYVELARIVGGAEPPARVA.

S-adenosyl-L-methionine contacts are provided by N18, L20, G45, E66, D89, and N110.

Belongs to the class I-like SAM-binding methyltransferase superfamily. rRNA adenine N(6)-methyltransferase family. RsmA subfamily.

Its subcellular location is the cytoplasm. The enzyme catalyses adenosine(1518)/adenosine(1519) in 16S rRNA + 4 S-adenosyl-L-methionine = N(6)-dimethyladenosine(1518)/N(6)-dimethyladenosine(1519) in 16S rRNA + 4 S-adenosyl-L-homocysteine + 4 H(+). Its function is as follows. Specifically dimethylates two adjacent adenosines (A1518 and A1519) in the loop of a conserved hairpin near the 3'-end of 16S rRNA in the 30S particle. May play a critical role in biogenesis of 30S subunits. The chain is Ribosomal RNA small subunit methyltransferase A from Cupriavidus metallidurans (strain ATCC 43123 / DSM 2839 / NBRC 102507 / CH34) (Ralstonia metallidurans).